The primary structure comprises 671 residues: Fusexin 1 (671 aa).

Over 1-12 (MRAVSDFLKNKW) the chain is Cytoplasmic. Residues 13–33 (VAVPAVALLILSLGFLAQNYI) traverse the membrane as a helical segment. Residues 34–574 (TGSFVSGDQI…DPFCADGPLE (541 aa)) are Extracellular-facing. 4 disulfides stabilise this stretch: Cys-145–Cys-180, Cys-409–Cys-452, Cys-480–Cys-500, and Cys-513–Cys-528. Residues 168-173 (GAIADY) form a fusion loop region. The chain crosses the membrane as a helical span at residues 575 to 595 (MLSKMFHLVAGTAVAFFTGSL). At 596-628 (GYRAGRWVDGEYQIKGGFDPLKSRSVSRAKRGR) the chain is on the cytoplasmic side. A helical transmembrane segment spans residues 629–649 (FLIGLIAELVSFLLGFYVILL). Position 650 (Val-650) is a topological domain, extracellular. A helical membrane pass occupies residues 651-671 (PIWAQLMVILGYVLFKYYTPF).

Belongs to the HAP2/GCS1 family. Fusexin 1 subfamily. Homotrimer stabilized by interdomain contacts and numerous Ca(2+) and Na(+) ions.

The protein resides in the cell surface. It is found in the cell membrane. Exhibits fusogenic activity. Mediates cell-cell fusion in mammalian cells (bilateral fusion). This is Fusexin 1 from Natrinema altunense (strain JCM 12890 / CGMCC 1.3731 / AJ2).